Consider the following 192-residue polypeptide: Ubiquitin-conjugating enzyme E2 1 (192 aa).

A disordered region spans residues 1–28; it reads MTTPSRRRLMRDFKKLQEDPPAGVSGAP. The 147-residue stretch at 4 to 150 folds into the UBC core domain; it reads PSRRRLMRDF…VQQIVEQSWL (147 aa). Residue Cys-88 is the Glycyl thioester intermediate of the active site. The disordered stretch occupies residues 171-192; it reads AAPGANDADDDRMDEGASGSNA.

Belongs to the ubiquitin-conjugating enzyme family. Interacts with ubr-1 and rfp-1. Interacts with ubc-13.

The enzyme catalyses S-ubiquitinyl-[E1 ubiquitin-activating enzyme]-L-cysteine + [E2 ubiquitin-conjugating enzyme]-L-cysteine = [E1 ubiquitin-activating enzyme]-L-cysteine + S-ubiquitinyl-[E2 ubiquitin-conjugating enzyme]-L-cysteine.. The protein operates within protein modification; protein ubiquitination. In terms of biological role, catalyzes the covalent attachment of ubiquitin to other proteins. The chain is Ubiquitin-conjugating enzyme E2 1 (ubc-1) from Caenorhabditis elegans.